A 962-amino-acid polypeptide reads, in one-letter code: Exportin-T (962 aa).

Residue M1 is modified to N-acetylmethionine. The segment at M1 to Y385 is necessary for interaction with Ran, nuclear localization and nuclear import. A necessary for tRNA-binding, cytoplasmic localization and nuclear export region spans residues F443–P962. K634 bears the N6-acetyllysine mark.

Belongs to the exportin family. Found in a complex with XPOT, Ran and tRNA. Probably found in a complex with nucleoporins. Interacts with Ran and tRNA in a GTP-dependent manner.

Its subcellular location is the nucleus. The protein resides in the cytoplasm. Mediates the nuclear export of aminoacylated tRNAs. In the nucleus binds to tRNA and to the GTPase Ran in its active GTP-bound form. Docking of this trimeric complex to the nuclear pore complex (NPC) is mediated through binding to nucleoporins. Upon transit of a nuclear export complex into the cytoplasm, disassembling of the complex and hydrolysis of Ran-GTP to Ran-GDP (induced by RANBP1 and RANGAP1, respectively) cause release of the tRNA from the export receptor. XPOT then return to the nuclear compartment and mediate another round of transport. The directionality of nuclear export is thought to be conferred by an asymmetric distribution of the GTP- and GDP-bound forms of Ran between the cytoplasm and nucleus. The sequence is that of Exportin-T (XPOT) from Homo sapiens (Human).